We begin with the raw amino-acid sequence, 304 residues long: MPLEAVVYPQDPFGYLSNCKDFMFHDLYSQEEFVAQDTKNNIDKLGHEQSFVEQGKEDDHQWRDYHQYPLLIPSLGEELGLTAIDVESHPPPQHRRKRRRTRNCKNKEEIENQRMTHIAVERNRRKQMNEYLAVLRSLMPSSYAQRGDQASIVGGAINYVKELEHILQSMEPKRTRTHDPKGDKTSTSSLVGPFTDFFSFPQYSTKSSSDVPESSSSPAEIEVTVAESHANIKIMTKKKPRQLLKLITSLQSLRLTLLHLNVTTLHNSILYSISVRVEEGSQLNTVDDIATALNQTIRRIQEET.

Residues 86 to 107 (VESHPPPQHRRKRRRTRNCKNK) form a disordered region. A compositionally biased stretch (basic residues) spans 92-104 (PQHRRKRRRTRNC). Residues 112-163 (NQRMTHIAVERNRRKQMNEYLAVLRSLMPSSYAQRGDQASIVGGAINYVKEL) form the bHLH domain.

In terms of assembly, homodimer. In terms of tissue distribution, expressed constitutively in roots, leaves, stems, and flowers.

It is found in the nucleus. This chain is Transcription factor bHLH94 (BHLH94), found in Arabidopsis thaliana (Mouse-ear cress).